Consider the following 321-residue polypeptide: GTP 3',8-cyclase (321 aa).

Positions 5-227 (SYDRVVDYLR…DEGYDGASPS (223 aa)) constitute a Radical SAM core domain. R14 serves as a coordination point for GTP. Residues C21 and C25 each contribute to the [4Fe-4S] cluster site. Y27 contributes to the S-adenosyl-L-methionine binding site. [4Fe-4S] cluster is bound at residue C28. R64 contributes to the GTP binding site. Residue G68 participates in S-adenosyl-L-methionine binding. T95 lines the GTP pocket. S-adenosyl-L-methionine is bound at residue S119. K155 is a binding site for GTP. S-adenosyl-L-methionine is bound at residue M189. Residues C249 and C252 each contribute to the [4Fe-4S] cluster site. 254-256 (RIR) is a binding site for GTP. C266 contributes to the [4Fe-4S] cluster binding site.

It belongs to the radical SAM superfamily. MoaA family. In terms of assembly, monomer and homodimer. The cofactor is [4Fe-4S] cluster.

It carries out the reaction GTP + AH2 + S-adenosyl-L-methionine = (8S)-3',8-cyclo-7,8-dihydroguanosine 5'-triphosphate + 5'-deoxyadenosine + L-methionine + A + H(+). It participates in cofactor biosynthesis; molybdopterin biosynthesis. Its function is as follows. Catalyzes the cyclization of GTP to (8S)-3',8-cyclo-7,8-dihydroguanosine 5'-triphosphate. This chain is GTP 3',8-cyclase, found in Sulfurimonas denitrificans (strain ATCC 33889 / DSM 1251) (Thiomicrospira denitrificans (strain ATCC 33889 / DSM 1251)).